The following is a 205-amino-acid chain: 3-demethoxyubiquinol 3-hydroxylase (205 aa).

Positions 54, 84, 87, 136, 168, and 171 each coordinate Fe cation.

Belongs to the COQ7 family. Fe cation is required as a cofactor.

It localises to the cell membrane. It carries out the reaction a 5-methoxy-2-methyl-3-(all-trans-polyprenyl)benzene-1,4-diol + AH2 + O2 = a 3-demethylubiquinol + A + H2O. It functions in the pathway cofactor biosynthesis; ubiquinone biosynthesis. Functionally, catalyzes the hydroxylation of 2-nonaprenyl-3-methyl-6-methoxy-1,4-benzoquinol during ubiquinone biosynthesis. The chain is 3-demethoxyubiquinol 3-hydroxylase from Delftia acidovorans (strain DSM 14801 / SPH-1).